The primary structure comprises 471 residues: Uronate isomerase (471 aa).

It belongs to the metallo-dependent hydrolases superfamily. Uronate isomerase family.

The enzyme catalyses D-glucuronate = D-fructuronate. The catalysed reaction is aldehydo-D-galacturonate = keto-D-tagaturonate. The protein operates within carbohydrate metabolism; pentose and glucuronate interconversion. The polypeptide is Uronate isomerase (Cellvibrio japonicus (strain Ueda107) (Pseudomonas fluorescens subsp. cellulosa)).